Consider the following 609-residue polypeptide: Pair-rule protein odd-paired (609 aa).

The interval 20–41 (RMSPNTTASNSNAQQQQQQQLE) is disordered. Residues 22 to 32 (SPNTTASNSNA) are compositionally biased toward polar residues. The C2H2-type 1; atypical zinc finger occupies 210-249 (MQCLWIDPDQPGLVPPGGRKTCNKVFHSMHEIVTHLTVEH). 4 consecutive C2H2-type zinc fingers follow at residues 258 to 285 (HACF…IRVH), 291 to 315 (FACP…KRTH), 321 to 345 (FKCE…SHVH), and 351 to 375 (YNCR…MKVH). 2 disordered regions span residues 373 to 550 (KVHG…ASAS) and 583 to 609 (EAMN…ATAY). The span at 399-409 (IITGGAQTPPS) shows a compositional bias: polar residues. Composition is skewed to low complexity over residues 414–434 (GSAG…IKSS) and 449–498 (HLGA…LTAH). Residues 528–537 (SHHHHPHHHQ) show a composition bias toward basic residues. The span at 538–550 (AAPSPGAAAASAS) shows a compositional bias: low complexity. The segment covering 591–601 (FGHHHHHHHLM) has biased composition (basic residues).

It belongs to the GLI C2H2-type zinc-finger protein family. Expressed throughout all segment primordia; expressed ubiquitously in the ectoderm and mesoderm precursors.

Its subcellular location is the nucleus. Functionally, transcription factor essential for parasegmental subdivision of the embryo. It is involved in the activation of wingless (wg) in odd parasegments. It is also required for the timely activation of wg in the remaining parasegments and for the timely activation of engrailed (en) in all parasegments. This Drosophila melanogaster (Fruit fly) protein is Pair-rule protein odd-paired (opa).